The primary structure comprises 304 residues: Ribonuclease BN (304 aa).

Histidine 63, histidine 65, aspartate 67, histidine 68, histidine 140, aspartate 211, and histidine 269 together coordinate Zn(2+). Aspartate 67 (proton acceptor) is an active-site residue.

The protein belongs to the RNase Z family. RNase BN subfamily. As to quaternary structure, homodimer. Requires Zn(2+) as cofactor.

In terms of biological role, zinc phosphodiesterase, which has both exoribonuclease and endoribonuclease activities. In Erwinia tasmaniensis (strain DSM 17950 / CFBP 7177 / CIP 109463 / NCPPB 4357 / Et1/99), this protein is Ribonuclease BN.